A 472-amino-acid chain; its full sequence is 3beta,22alpha-dihydroxysteroid 3-dehydrogenase (472 aa).

The chain crosses the membrane as a helical span at residues 1–21 (MAFTAFLLLLSSIAAGFLLLL). C418 contributes to the heme binding site.

It belongs to the cytochrome P450 family. Requires heme as cofactor.

It is found in the membrane. It carries out the reaction (22S)-22-hydroxycampesterol + reduced [NADPH--hemoprotein reductase] + O2 = (22S)-22-hydroxycampest-4-en-3-one + oxidized [NADPH--hemoprotein reductase] + 2 H2O + H(+). The catalysed reaction is 6-deoxoteasterone + reduced [NADPH--hemoprotein reductase] + O2 = 3-dehydro-6-deoxoteasterone + oxidized [NADPH--hemoprotein reductase] + 2 H2O + H(+). The enzyme catalyses 6-deoxycathasterone + reduced [NADPH--hemoprotein reductase] + O2 = (22S,24R)-22-hydroxy-5alpha-ergostan-3-one + oxidized [NADPH--hemoprotein reductase] + 2 H2O + H(+). It catalyses the reaction (22R,23R)-22,23-dihydroxycampesterol + reduced [NADPH--hemoprotein reductase] + O2 = (22R,23R)-22,23-dihydroxycampest-4-en-3-one + oxidized [NADPH--hemoprotein reductase] + 2 H2O + H(+). The protein operates within plant hormone biosynthesis; brassinosteroid biosynthesis. In terms of biological role, catalyzes C3-oxidation steps in brassinosteroids biosynthesis. Converts (22S)-22-hydroxycampesterol (22-OHCR) to (22S,24R)-22-hydroxyergost-4-en-3-one (22-hydroxy-campesta-4-en-3-one, 22-OH-4-en-3-one), 6-deoxocathasterone (6-deoxoCT) to (22S,24R)-22-hydroxy-5alpha-ergostan-3-one (22-hydroxy-campesta-3-one, 22-OH-3-one), (22R,23R)-22,23-dihydroxycampesterol (22,23-diOHCR) to (22R,23R)-22,23-dihydroxy-campest-4-en-3-one (22,23-diOH-4-en-3-one), and 6-deoxoteasterone (6-deoxoTE) to 3-dehydro-6-deoxoteasterone (6-deoxo3DT, 6-deoxo-3-DHT). The polypeptide is 3beta,22alpha-dihydroxysteroid 3-dehydrogenase (Arabidopsis thaliana (Mouse-ear cress)).